We begin with the raw amino-acid sequence, 499 residues long: Maturase K (499 aa).

Belongs to the intron maturase 2 family. MatK subfamily.

The protein resides in the plastid. It localises to the chloroplast. In terms of biological role, usually encoded in the trnK tRNA gene intron. Probably assists in splicing its own and other chloroplast group II introns. This chain is Maturase K, found in Ceratozamia mexicana (Mexican horncone).